We begin with the raw amino-acid sequence, 422 residues long: Histidine--tRNA ligase (422 aa).

The protein belongs to the class-II aminoacyl-tRNA synthetase family. In terms of assembly, homodimer.

It is found in the cytoplasm. The enzyme catalyses tRNA(His) + L-histidine + ATP = L-histidyl-tRNA(His) + AMP + diphosphate + H(+). The chain is Histidine--tRNA ligase from Mycolicibacterium vanbaalenii (strain DSM 7251 / JCM 13017 / BCRC 16820 / KCTC 9966 / NRRL B-24157 / PYR-1) (Mycobacterium vanbaalenii).